A 176-amino-acid chain; its full sequence is Ferritin, higher subunit (176 aa).

The Ferritin-like diiron domain occupies 7–156 (QNFHRDCEAA…DYITNLKRLG (150 aa)). Residues E24, E58, E59, H62, E104, and Q138 each coordinate Fe cation.

This sequence belongs to the ferritin family. As to quaternary structure, oligomer of 24 subunits. The functional molecule is roughly spherical and contains a central cavity into which the polymeric mineral iron core is deposited.

The enzyme catalyses 4 Fe(2+) + O2 + 4 H(+) = 4 Fe(3+) + 2 H2O. Stores iron in a soluble, non-toxic, readily available form. Important for iron homeostasis. Has ferroxidase activity. Iron is taken up in the ferrous form and deposited as ferric hydroxides after oxidation. This Aquarana catesbeiana (American bullfrog) protein is Ferritin, higher subunit.